The sequence spans 206 residues: LexA repressor (206 aa).

Residues 28-48 (RAEIATRLGFKSANAAEEHLK) constitute a DNA-binding region (H-T-H motif). Active-site for autocatalytic cleavage activity residues include S123 and K160.

This sequence belongs to the peptidase S24 family. Homodimer.

It carries out the reaction Hydrolysis of Ala-|-Gly bond in repressor LexA.. Represses a number of genes involved in the response to DNA damage (SOS response), including recA and lexA. In the presence of single-stranded DNA, RecA interacts with LexA causing an autocatalytic cleavage which disrupts the DNA-binding part of LexA, leading to derepression of the SOS regulon and eventually DNA repair. The polypeptide is LexA repressor (Shewanella baltica (strain OS223)).